The chain runs to 440 residues: Thymidine phosphorylase (440 aa).

It belongs to the thymidine/pyrimidine-nucleoside phosphorylase family. In terms of assembly, homodimer.

The enzyme catalyses thymidine + phosphate = 2-deoxy-alpha-D-ribose 1-phosphate + thymine. It functions in the pathway pyrimidine metabolism; dTMP biosynthesis via salvage pathway; dTMP from thymine: step 1/2. In terms of biological role, the enzymes which catalyze the reversible phosphorolysis of pyrimidine nucleosides are involved in the degradation of these compounds and in their utilization as carbon and energy sources, or in the rescue of pyrimidine bases for nucleotide synthesis. The chain is Thymidine phosphorylase from Klebsiella pneumoniae (strain 342).